A 279-amino-acid chain; its full sequence is Dihydropteroate synthase type-1 (279 aa).

One can recognise a Pterin-binding domain in the interval 1-258 (MVTVFGILNL…APGDLRSAIT (258 aa)). Residue Asn-9 participates in Mg(2+) binding. Residues Asp-82, Asn-101, Asp-173, Lys-212, and 246 to 248 (RTH) contribute to the (7,8-dihydropterin-6-yl)methyl diphosphate site.

This sequence belongs to the DHPS family. As to quaternary structure, homodimer or homotrimer. Mg(2+) serves as cofactor.

The enzyme catalyses (7,8-dihydropterin-6-yl)methyl diphosphate + 4-aminobenzoate = 7,8-dihydropteroate + diphosphate. It participates in cofactor biosynthesis; tetrahydrofolate biosynthesis; 7,8-dihydrofolate from 2-amino-4-hydroxy-6-hydroxymethyl-7,8-dihydropteridine diphosphate and 4-aminobenzoate: step 1/2. Functionally, catalyzes the condensation of para-aminobenzoate (pABA) with 6-hydroxymethyl-7,8-dihydropterin diphosphate (DHPt-PP) to form 7,8-dihydropteroate (H2Pte), the immediate precursor of folate derivatives. This Corynebacterium glutamicum (Brevibacterium saccharolyticum) protein is Dihydropteroate synthase type-1 (sulI).